Reading from the N-terminus, the 427-residue chain is Serine--tRNA ligase (427 aa).

Residue Thr230–Glu232 coordinates L-serine. Arg261–Glu263 contributes to the ATP binding site. Position 284 (Glu284) interacts with L-serine. Glu348 to Ser351 contacts ATP. An L-serine-binding site is contributed by Ser384.

It belongs to the class-II aminoacyl-tRNA synthetase family. Type-1 seryl-tRNA synthetase subfamily. Homodimer. The tRNA molecule binds across the dimer.

The protein localises to the cytoplasm. It carries out the reaction tRNA(Ser) + L-serine + ATP = L-seryl-tRNA(Ser) + AMP + diphosphate + H(+). The catalysed reaction is tRNA(Sec) + L-serine + ATP = L-seryl-tRNA(Sec) + AMP + diphosphate + H(+). Its pathway is aminoacyl-tRNA biosynthesis; selenocysteinyl-tRNA(Sec) biosynthesis; L-seryl-tRNA(Sec) from L-serine and tRNA(Sec): step 1/1. In terms of biological role, catalyzes the attachment of serine to tRNA(Ser). Is also able to aminoacylate tRNA(Sec) with serine, to form the misacylated tRNA L-seryl-tRNA(Sec), which will be further converted into selenocysteinyl-tRNA(Sec). In Syntrophomonas wolfei subsp. wolfei (strain DSM 2245B / Goettingen), this protein is Serine--tRNA ligase.